The primary structure comprises 449 residues: Phosphoglucosamine mutase (449 aa).

The active-site Phosphoserine intermediate is S101. Mg(2+) is bound by residues S101, D243, D245, and D247. S101 bears the Phosphoserine mark.

The protein belongs to the phosphohexose mutase family. Requires Mg(2+) as cofactor. Activated by phosphorylation.

The catalysed reaction is alpha-D-glucosamine 1-phosphate = D-glucosamine 6-phosphate. In terms of biological role, catalyzes the conversion of glucosamine-6-phosphate to glucosamine-1-phosphate. The protein is Phosphoglucosamine mutase of Syntrophobacter fumaroxidans (strain DSM 10017 / MPOB).